A 208-amino-acid polypeptide reads, in one-letter code: Small ribosomal subunit protein uS4 (208 aa).

In terms of domain architecture, S4 RNA-binding spans 97–158; that stretch reads TRLDNVIYRM…RAQKYLCVQE (62 aa).

The protein belongs to the universal ribosomal protein uS4 family. As to quaternary structure, part of the 30S ribosomal subunit. Contacts protein S5. The interaction surface between S4 and S5 is involved in control of translational fidelity.

Its function is as follows. One of the primary rRNA binding proteins, it binds directly to 16S rRNA where it nucleates assembly of the body of the 30S subunit. Functionally, with S5 and S12 plays an important role in translational accuracy. This is Small ribosomal subunit protein uS4 from Xylella fastidiosa (strain M12).